A 151-amino-acid polypeptide reads, in one-letter code: uncharacterized protein (151 aa).

The interval 123-151 (PAGQNAGTGPAQKLKTDETRCYERRGGSQ) is disordered. The segment covering 136–151 (LKTDETRCYERRGGSQ) has biased composition (basic and acidic residues).

This is an uncharacterized protein from Triticum aestivum (Wheat).